The chain runs to 169 residues: Cysteine synthase B (169 aa).

Residue Lys45 is modified to N6-(pyridoxal phosphate)lysine. A pyridoxal 5'-phosphate-binding site is contributed by Asn75. Positions 146-169 (ANGDNPEAHYTSTGPEIWRQTGGT) are disordered.

This sequence belongs to the cysteine synthase/cystathionine beta-synthase family. Pyridoxal 5'-phosphate is required as a cofactor.

It catalyses the reaction O-acetyl-L-serine + hydrogen sulfide = L-cysteine + acetate. Its pathway is amino-acid biosynthesis; L-cysteine biosynthesis; L-cysteine from L-serine: step 2/2. The chain is Cysteine synthase B (cysM) from Pseudomonas syringae pv. syringae.